The primary structure comprises 316 residues: Porphobilinogen deaminase (316 aa).

Cys245 is modified (S-(dipyrrolylmethanemethyl)cysteine).

This sequence belongs to the HMBS family. As to quaternary structure, monomer. Requires dipyrromethane as cofactor.

It catalyses the reaction 4 porphobilinogen + H2O = hydroxymethylbilane + 4 NH4(+). Its pathway is porphyrin-containing compound metabolism; protoporphyrin-IX biosynthesis; coproporphyrinogen-III from 5-aminolevulinate: step 2/4. It participates in porphyrin-containing compound metabolism; chlorophyll biosynthesis. Its function is as follows. Tetrapolymerization of the monopyrrole PBG into the hydroxymethylbilane pre-uroporphyrinogen in several discrete steps. This chain is Porphobilinogen deaminase, found in Prochlorococcus marinus subsp. pastoris (strain CCMP1986 / NIES-2087 / MED4).